The primary structure comprises 287 residues: Phosphatidylserine decarboxylase proenzyme (287 aa).

Catalysis depends on charge relay system; for autoendoproteolytic cleavage activity residues D90, H147, and S252. The Schiff-base intermediate with substrate; via pyruvic acid; for decarboxylase activity role is filled by S252. Pyruvic acid (Ser); by autocatalysis is present on S252.

Belongs to the phosphatidylserine decarboxylase family. PSD-B subfamily. Prokaryotic type I sub-subfamily. As to quaternary structure, heterodimer of a large membrane-associated beta subunit and a small pyruvoyl-containing alpha subunit. Requires pyruvate as cofactor. Post-translationally, is synthesized initially as an inactive proenzyme. Formation of the active enzyme involves a self-maturation process in which the active site pyruvoyl group is generated from an internal serine residue via an autocatalytic post-translational modification. Two non-identical subunits are generated from the proenzyme in this reaction, and the pyruvate is formed at the N-terminus of the alpha chain, which is derived from the carboxyl end of the proenzyme. The autoendoproteolytic cleavage occurs by a canonical serine protease mechanism, in which the side chain hydroxyl group of the serine supplies its oxygen atom to form the C-terminus of the beta chain, while the remainder of the serine residue undergoes an oxidative deamination to produce ammonia and the pyruvoyl prosthetic group on the alpha chain. During this reaction, the Ser that is part of the protease active site of the proenzyme becomes the pyruvoyl prosthetic group, which constitutes an essential element of the active site of the mature decarboxylase.

It localises to the cell membrane. It catalyses the reaction a 1,2-diacyl-sn-glycero-3-phospho-L-serine + H(+) = a 1,2-diacyl-sn-glycero-3-phosphoethanolamine + CO2. It participates in phospholipid metabolism; phosphatidylethanolamine biosynthesis; phosphatidylethanolamine from CDP-diacylglycerol: step 2/2. Its function is as follows. Catalyzes the formation of phosphatidylethanolamine (PtdEtn) from phosphatidylserine (PtdSer). In Pseudomonas putida (strain ATCC 47054 / DSM 6125 / CFBP 8728 / NCIMB 11950 / KT2440), this protein is Phosphatidylserine decarboxylase proenzyme.